The following is a 348-amino-acid chain: Flagellar P-ring protein (348 aa).

The first 16 residues, 1 to 16, serve as a signal peptide directing secretion; that stretch reads MRIFLLCLALSLSVFA.

This sequence belongs to the FlgI family. In terms of assembly, the basal body constitutes a major portion of the flagellar organelle and consists of four rings (L,P,S, and M) mounted on a central rod.

The protein localises to the periplasm. It localises to the bacterial flagellum basal body. Assembles around the rod to form the L-ring and probably protects the motor/basal body from shearing forces during rotation. The protein is Flagellar P-ring protein of Campylobacter lari (strain RM2100 / D67 / ATCC BAA-1060).